A 315-amino-acid polypeptide reads, in one-letter code: Ribosomal RNA small subunit methyltransferase H (315 aa).

Residues 35–37 (GGH), D55, F80, D102, and Q109 each bind S-adenosyl-L-methionine.

The protein belongs to the methyltransferase superfamily. RsmH family.

Its subcellular location is the cytoplasm. It carries out the reaction cytidine(1402) in 16S rRNA + S-adenosyl-L-methionine = N(4)-methylcytidine(1402) in 16S rRNA + S-adenosyl-L-homocysteine + H(+). In terms of biological role, specifically methylates the N4 position of cytidine in position 1402 (C1402) of 16S rRNA. The sequence is that of Ribosomal RNA small subunit methyltransferase H from Buchnera aphidicola subsp. Baizongia pistaciae (strain Bp).